A 147-amino-acid chain; its full sequence is Hemoglobin subunit beta (147 aa).

N-acetylvaline is present on valine 2. The Globin domain occupies 3–147 (HLTAEEKAAV…VATALAHKYH (145 aa)). Threonine 13 bears the Phosphothreonine mark. Serine 45 carries the post-translational modification Phosphoserine. Lysine 60 carries the post-translational modification N6-acetyllysine. Histidine 64 contacts heme b. Lysine 83 is modified (N6-acetyllysine). Heme b is bound at residue histidine 93. Cysteine 94 carries the post-translational modification S-nitrosocysteine. Lysine 145 bears the N6-acetyllysine mark.

This sequence belongs to the globin family. In terms of assembly, heterotetramer of two alpha chains and two beta chains. Red blood cells.

Its function is as follows. Involved in oxygen transport from the lung to the various peripheral tissues. The polypeptide is Hemoglobin subunit beta (HBB) (Carlito syrichta (Philippine tarsier)).